The chain runs to 155 residues: Egg-lysin (155 aa).

Residues 1-18 form the signal peptide; the sequence is MKLLVLCLFAMMATLAVS.

In terms of assembly, monomer. Homodimer. Molecules associate into dimers and then rapidly dissociate again. Interacts (as a monomer) with the egg vitelline layer protein VERL (via VERL repeats); each VERL chain can bind multiple copies of lysin. As to expression, sperm (at protein level).

The protein localises to the cytoplasmic vesicle. The protein resides in the secretory vesicle. It is found in the acrosome lumen. In terms of biological role, creates a 3 um hole in the egg vitelline layer through which the sperm passes. Does not have enzyme activity. Species-specific interaction between the sperm protein lysin and the egg protein VERL exposes a basic surface on lysin that may dissociate the egg vitelline layer via electrostatic repulsion. Plays a role in ensuring species-specific fertilization. This Haliotis corrugata (Pink abalone) protein is Egg-lysin.